The primary structure comprises 168 residues: Oleosin 18.2 kDa (168 aa).

Residue alanine 2 is modified to N-acetylalanine. The tract at residues 2–45 (AEVRDRNLPHQVQVHPQYRLDNTTGGGYGAKNYHSGPSTSQVLA) is polar. 3 consecutive transmembrane segments (helical) span residues 43–63 (VLAVLTLLPIGGTLLALAGLT), 76–96 (PLFIIFSPVLVPAAIAIAMAV), and 97–117 (TGFLSSGAFGLTGLSSLSYVL). Residues 46 to 117 (VLTLLPIGGT…TGLSSLSYVL (72 aa)) are hydrophobic.

Belongs to the oleosin family.

It is found in the lipid droplet. The protein resides in the membrane. In terms of biological role, may have a structural role to stabilize the lipid body during desiccation of the seed by preventing coalescence of the oil. Probably interacts with both lipid and phospholipid moieties of lipid bodies. May also provide recognition signals for specific lipase anchorage in lipolysis during seedling growth. The polypeptide is Oleosin 18.2 kDa (MATP6-A) (Gossypium hirsutum (Upland cotton)).